The sequence spans 295 residues: UDP-N-acetylenolpyruvoylglucosamine reductase (295 aa).

Residues 24 to 188 (KVGGNAEIFF…LKVIFKINKG (165 aa)) enclose the FAD-binding PCMH-type domain. Residue R168 is part of the active site. The active-site Proton donor is the S217. E287 is an active-site residue.

Belongs to the MurB family. The cofactor is FAD.

The protein resides in the cytoplasm. The enzyme catalyses UDP-N-acetyl-alpha-D-muramate + NADP(+) = UDP-N-acetyl-3-O-(1-carboxyvinyl)-alpha-D-glucosamine + NADPH + H(+). Its pathway is cell wall biogenesis; peptidoglycan biosynthesis. Cell wall formation. This is UDP-N-acetylenolpyruvoylglucosamine reductase from Rickettsia rickettsii (strain Iowa).